Here is a 214-residue protein sequence, read N- to C-terminus: Probable nicotinate-nucleotide adenylyltransferase (214 aa).

This sequence belongs to the NadD family.

It catalyses the reaction nicotinate beta-D-ribonucleotide + ATP + H(+) = deamido-NAD(+) + diphosphate. The protein operates within cofactor biosynthesis; NAD(+) biosynthesis; deamido-NAD(+) from nicotinate D-ribonucleotide: step 1/1. Catalyzes the reversible adenylation of nicotinate mononucleotide (NaMN) to nicotinic acid adenine dinucleotide (NaAD). The polypeptide is Probable nicotinate-nucleotide adenylyltransferase (Pseudomonas paraeruginosa (strain DSM 24068 / PA7) (Pseudomonas aeruginosa (strain PA7))).